The sequence spans 243 residues: Glycerophosphodiester phosphodiesterase (243 aa).

A GP-PDE domain is found at 3-239; that stretch reads TLVIAHRGDS…DDPETLINLV (237 aa). H8 serves as the catalytic Proton acceptor. E35 and D37 together coordinate Ca(2+). H50 serves as the catalytic Proton donor. E110 is a Ca(2+) binding site.

Belongs to the glycerophosphoryl diester phosphodiesterase family. As to quaternary structure, homodimer. It depends on Mg(2+) as a cofactor. Ca(2+) serves as cofactor.

It carries out the reaction a sn-glycero-3-phosphodiester + H2O = an alcohol + sn-glycerol 3-phosphate + H(+). The enzyme catalyses sn-glycerol 3-phosphocholine + H2O = sn-glycerol 3-phosphate + choline + H(+). With respect to regulation, inhibited by EDTA. In terms of biological role, glycerophosphodiester phosphodiesterase hydrolyzes glycerophosphodiesters into glycerol-3-phosphate (G3P) and the corresponding alcohol. Can use glycerophosphocholine. The protein is Glycerophosphodiester phosphodiesterase of Caldanaerobacter subterraneus subsp. tengcongensis (strain DSM 15242 / JCM 11007 / NBRC 100824 / MB4) (Thermoanaerobacter tengcongensis).